A 412-amino-acid chain; its full sequence is Subtilisin-like protease 6 (412 aa).

A signal peptide spans 1–20 (MGFITKAIPIVLAALSTVNG). The propeptide occupies 21–127 (ARILEAGPHA…VRTTTNGTNL (107 aa)). The region spanning 36–120 (KYIVVMKKDV…FIEPDFVVRT (85 aa)) is the Inhibitor I9 domain. Positions 135–412 (SWGLARVGSK…SKLIYNGSGK (278 aa)) constitute a Peptidase S8 domain. Residues Asp167 and His198 each act as charge relay system in the active site. 2 N-linked (GlcNAc...) asparagine glycosylation sites follow: Asn252 and Asn264. Ser358 serves as the catalytic Charge relay system. Asn408 carries an N-linked (GlcNAc...) asparagine glycan.

Belongs to the peptidase S8 family.

The protein resides in the secreted. Functionally, secreted subtilisin-like serine protease with keratinolytic activity that contributes to pathogenicity. In Arthroderma benhamiae (strain ATCC MYA-4681 / CBS 112371) (Trichophyton mentagrophytes), this protein is Subtilisin-like protease 6 (SUB6).